The primary structure comprises 357 residues: GTPase Obg (357 aa).

In terms of domain architecture, Obg spans methionine 1–leucine 159. Positions alanine 160 to glutamate 343 constitute an OBG-type G domain. GTP is bound by residues glycine 166–serine 173, phenylalanine 191–tyrosine 195, aspartate 213–glycine 216, asparagine 293–aspartate 296, and serine 324–valine 326. Mg(2+) is bound by residues serine 173 and threonine 193.

The protein belongs to the TRAFAC class OBG-HflX-like GTPase superfamily. OBG GTPase family. As to quaternary structure, monomer. Requires Mg(2+) as cofactor.

It is found in the cytoplasm. Its function is as follows. An essential GTPase which binds GTP, GDP and possibly (p)ppGpp with moderate affinity, with high nucleotide exchange rates and a fairly low GTP hydrolysis rate. Plays a role in control of the cell cycle, stress response, ribosome biogenesis and in those bacteria that undergo differentiation, in morphogenesis control. This chain is GTPase Obg, found in Xylella fastidiosa (strain M23).